The primary structure comprises 602 residues: Zinc finger protein 652-B (602 aa).

The tract at residues 60-232 (FQDSKPTNEV…PSDKAKSEEK (173 aa)) is disordered. Basic and acidic residues predominate over residues 65–79 (PTNEVHAVKGERENS). Acidic residues-rich tracts occupy residues 80–108 (GESEEEEDEDDDDDDDDDDDDEEGEDEDE) and 148–167 (DDEGGDSGEDDQDSHEDEEN). Residues 222-232 (SPSDKAKSEEK) are compositionally biased toward basic and acidic residues. The C2H2-type 1 zinc finger occupies 235-258 (LTCDKCPRVFNTRWYLEKHMNVTH). The C2H2-type 2; degenerate zinc finger occupies 262-284 (QICDKCGKKFVLESELSLHLQTD). 6 C2H2-type zinc fingers span residues 289 to 312 (IQCITCNKTFKKLWSLHEHIKIVH), 319 to 341 (FSCEICEKKFYTMAHVRKHLVAH), 347 to 369 (FTCETCGKSFKRSMSLKVHSLQH), 375 to 397 (FRCENCDERFQYKYQLRSHMSIH), 403 to 425 (FMCQWCGKDFNMKQYFDEHMKTH), and 431 to 453 (FICEICGKSFTSRPNMKRHRRTH). The segment at 459 to 482 (YPCDVCGMRFRFSNMLKAHKEKCF) adopts a C2H2-type 9; degenerate zinc-finger fold. The interval 543 to 575 (PFSHLHLHPHSHTHHLAVPPVPHLPPPPALFKS) is disordered. Positions 545–557 (SHLHLHPHSHTHH) are enriched in basic residues. Over residues 561-571 (PPVPHLPPPPA) the composition is skewed to pro residues.

The protein belongs to the krueppel C2H2-type zinc-finger protein family.

It localises to the nucleus. In terms of biological role, may be involved in transcriptional regulation. The sequence is that of Zinc finger protein 652-B (znf652-b) from Xenopus laevis (African clawed frog).